Reading from the N-terminus, the 1453-residue chain is Spike glycoprotein (1453 aa).

An N-terminal signal peptide occupies residues 1-31; the sequence is MIVLILCLLLFSYNSVICTSNNDCVQGNVTQ. 2 S1 regions span residues 19-791 and 32-780; these read TSNN…ERTR and LPGN…FYYY. Topologically, residues 32–1394 are virion surface; the sequence is LPGNENIIKD…NRIETYVKWP (1363 aa). Residues 661–805 form an interaction with host ANPEP region; the sequence is VIYEEGDNIV…DSNDVDCEPI (145 aa). S2 regions lie at residues 781 to 1453 and 794 to 1453; these read SIYN…VHVH and AIDS…VHVH. The fusion peptide stretch occupies residues 1026–1047; the sequence is AGGITLGSLGGGAVSIPFAIAV. Residues 1041–1160 are heptad repeat 1 (HR1); it reads IPFAIAVQAR…QVDRLITGRL (120 aa). Coiled coils occupy residues 1108 to 1152 and 1342 to 1384; these read QDVV…DAQV and TYLN…LEWL. Residues 1309–1406 are heptad repeat 2 (HR2); the sequence is PDYIDINQTV…VWLLIGLVVI (98 aa). Residues 1395 to 1414 traverse the membrane as a helical segment; that stretch reads WYVWLLIGLVVIFCIPILLF. The Intravirion segment spans residues 1415–1453; sequence CCCSTGCCGCIGCLGSCCHSICSRRQFESYEPIEKVHVH. Positions 1449–1453 match the KxHxx motif; sequence KVHVH.

The protein belongs to the alphacoronaviruses spike protein family. As to quaternary structure, homotrimer. During virus morphogenesis, found in a complex with M and HE proteins. Interacts with host ANPEP.

The protein localises to the virion membrane. The protein resides in the host endoplasmic reticulum-Golgi intermediate compartment membrane. S1 region attaches the virion to the cell membrane by interacting with host ANPEP/aminopeptidase N, initiating the infection. Binding to the receptor probably induces conformational changes in the S glycoprotein unmasking the fusion peptide of S2 region and activating membranes fusion. S2 region belongs to the class I viral fusion protein. Under the current model, the protein has at least 3 conformational states: pre-fusion native state, pre-hairpin intermediate state, and post-fusion hairpin state. During viral and target cell membrane fusion, the coiled coil regions (heptad repeats) regions assume a trimer-of-hairpins structure, positioning the fusion peptide in close proximity to the C-terminal region of the ectodomain. The formation of this structure appears to drive apposition and subsequent fusion of viral and target cell membranes. The sequence is that of Spike glycoprotein from Canis lupus familiaris (Dog).